We begin with the raw amino-acid sequence, 59 residues long: Protein QUA-QUINE STARCH (59 aa).

Expressed in hypocotyls, leaves, vasculature, hydathodes, trichomes, pedicels, sepals, filaments, mature pollen, stigma papillae, styles, siliques, root and shoot tips, but not in shoot meristem, petals or root epidermis.

It localises to the cytoplasm. Involved in regulating carbon and nitrogen allocation to starch and protein. This is Protein QUA-QUINE STARCH from Arabidopsis thaliana (Mouse-ear cress).